Consider the following 426-residue polypeptide: Anaerobic glycerol-3-phosphate dehydrogenase subunit C (426 aa).

4Fe-4S ferredoxin-type domains follow at residues 21-53 (SYKY…LYPG) and 67-99 (KSAE…GDLI). 8 residues coordinate [4Fe-4S] cluster: cysteine 32, cysteine 35, cysteine 38, cysteine 42, cysteine 79, cysteine 82, cysteine 85, and cysteine 89.

Composed of a catalytic GlpA/B dimer and of GlpC.

The protein resides in the cell inner membrane. It functions in the pathway polyol metabolism; glycerol degradation via glycerol kinase pathway; glycerone phosphate from sn-glycerol 3-phosphate (anaerobic route): step 1/1. Functionally, electron transfer protein; may also function as the membrane anchor for the GlpAB dimer. This is Anaerobic glycerol-3-phosphate dehydrogenase subunit C (glpC) from Haemophilus influenzae (strain ATCC 51907 / DSM 11121 / KW20 / Rd).